A 128-amino-acid chain; its full sequence is Probable 4-amino-4-deoxy-L-arabinose-phosphoundecaprenol flippase subunit ArnF (128 aa).

Over 1–2 (MG) the chain is Cytoplasmic. Residues 3–23 (LMWGLFSVIIASAAQLSLGFA) form a helical membrane-spanning segment. Over 24 to 35 (ASHLPPMTHLWD) the chain is Periplasmic. The helical transmembrane segment at 36-56 (FIAALLAFGLDARILLLGLLG) threads the bilayer. The Cytoplasmic portion of the chain corresponds to 57–76 (YLLSVFCWYKTLHKLALSKA). Residues 77-97 (YALLSMSYVLVWIASMVLPGW) traverse the membrane as a helical segment. The Periplasmic portion of the chain corresponds to 98 to 100 (EGT). The helical transmembrane segment at 101-121 (FSLKALLGVACIMSGLMLIFL) threads the bilayer. The Cytoplasmic portion of the chain corresponds to 122–128 (PTTKQRY).

This sequence belongs to the ArnF family. In terms of assembly, heterodimer of ArnE and ArnF.

The protein localises to the cell inner membrane. It functions in the pathway bacterial outer membrane biogenesis; lipopolysaccharide biosynthesis. Its function is as follows. Translocates 4-amino-4-deoxy-L-arabinose-phosphoundecaprenol (alpha-L-Ara4N-phosphoundecaprenol) from the cytoplasmic to the periplasmic side of the inner membrane. The protein is Probable 4-amino-4-deoxy-L-arabinose-phosphoundecaprenol flippase subunit ArnF of Escherichia coli O127:H6 (strain E2348/69 / EPEC).